The sequence spans 209 residues: Uracil phosphoribosyltransferase (209 aa).

5-phospho-alpha-D-ribose 1-diphosphate contacts are provided by residues Arg-79, Arg-104, and 131–139 (DPMLATGGS). Uracil contacts are provided by residues Ile-194 and 199–201 (GDA). Residue Asp-200 participates in 5-phospho-alpha-D-ribose 1-diphosphate binding.

This sequence belongs to the UPRTase family. Mg(2+) serves as cofactor.

The enzyme catalyses UMP + diphosphate = 5-phospho-alpha-D-ribose 1-diphosphate + uracil. It functions in the pathway pyrimidine metabolism; UMP biosynthesis via salvage pathway; UMP from uracil: step 1/1. Allosterically activated by GTP. Catalyzes the conversion of uracil and 5-phospho-alpha-D-ribose 1-diphosphate (PRPP) to UMP and diphosphate. In Clostridium tetani (strain Massachusetts / E88), this protein is Uracil phosphoribosyltransferase.